The sequence spans 82 residues: Progonadoliberin-3 (82 aa).

Positions 1–23 (MDLSNRTVVQVVVLALVAQVTLS) are cleaved as a signal peptide. Q24 is modified (pyrrolidone carboxylic acid). At G33 the chain carries Glycine amide.

The protein belongs to the GnRH family.

The protein localises to the secreted. Its function is as follows. Stimulates the secretion of gonadotropins. This Salmo trutta (Brown trout) protein is Progonadoliberin-3 (gnrh3).